Consider the following 206-residue polypeptide: Acidic proline-rich protein PRP33 (206 aa).

Positions M1–L13 are cleaved as a signal peptide. Residues S15–S206 form a disordered region. Acidic residues predominate over residues E55–G71. 6 tandem repeats follow at residues P80 to G97, P98 to G115, P116 to G133, P134 to G152, P153 to G170, and P171 to D189. The interval P80–D189 is 6 X 18 AA approximate tandem repeats. Positions G103–N112 are enriched in low complexity. Residues P113 to Q174 are compositionally biased toward pro residues.

It is found in the secreted. In terms of biological role, may protect teeth by binding to tannins. This is Acidic proline-rich protein PRP33 (Prpg1) from Rattus norvegicus (Rat).